The following is a 622-amino-acid chain: MDNKKIVLLIIFSTSLLFLWDAWVKEQEKFNAPPSVVAQANSAAGVTQSKNNDGLPIPGSELTASQTGSDLNGIPSSGDTADSVTPRLLPSGEQIRVVTDKVIAEIDTMGGDLRRLELLQQPSPEDENVPYSLLHSEASRTYVAQSGLVGEGLPNHKTVYQVESGIRNYELTAGEDKVVIRLLAPETQGVQVIKTYTFHRDSYVIDIGFEIANKSDATIRPFAYFQMLRDDTPPPAHTMMIRSFLGAAVYTDEEKYQKIPFDDLDKGKTDYPANANNGWIAMLEHYFLTAWLPPQQTPREYFAKRQSDNLYTAGVIVPAGVITAGETVTTTMPLYAGPEEQDRLAELAPGLELTVDYGWLTMIAKPLFRLLSFYHSWTGNWGIAIILLTITVKLLFFPLSAAGYRSMAKLRLVTPKLKRIQDQYKGDRQRMHQAMMDFYKTEKINPMGGCFPILVQIPVFIALYWTILAAVELRYAPFALWITDLSSPDPKYLLPVLLGISMFIQTRLNPTPTDPIQAKIMQIMPVAFSAIFFFFPAGLVLYSLVNNILSIAQQWKITKMYGTAPSQDAPESPASKDAPELPVSNQVINDSENTEAPASGPADSPKKPVNIPRRMHKRTRKK.

Residues 6–26 (IVLLIIFSTSLLFLWDAWVKE) form a helical membrane-spanning segment. The interval 47–87 (TQSKNNDGLPIPGSELTASQTGSDLNGIPSSGDTADSVTPR) is disordered. Over residues 62-83 (LTASQTGSDLNGIPSSGDTADS) the composition is skewed to polar residues. The next 3 membrane-spanning stretches (helical) occupy residues 381 to 401 (WGIAIILLTITVKLLFFPLSA), 451 to 471 (FPILVQIPVFIALYWTILAAV), and 525 to 545 (PVAFSAIFFFFPAGLVLYSLV). The disordered stretch occupies residues 563-622 (TAPSQDAPESPASKDAPELPVSNQVINDSENTEAPASGPADSPKKPVNIPRRMHKRTRKK). A compositionally biased stretch (polar residues) spans 583–596 (VSNQVINDSENTEA). Over residues 613–622 (RRMHKRTRKK) the composition is skewed to basic residues.

It belongs to the OXA1/ALB3/YidC family. Type 1 subfamily. As to quaternary structure, interacts with the Sec translocase complex via SecD. Specifically interacts with transmembrane segments of nascent integral membrane proteins during membrane integration.

The protein localises to the cell inner membrane. Required for the insertion and/or proper folding and/or complex formation of integral membrane proteins into the membrane. Involved in integration of membrane proteins that insert both dependently and independently of the Sec translocase complex, as well as at least some lipoproteins. Aids folding of multispanning membrane proteins. The protein is Membrane protein insertase YidC of Nitrosomonas eutropha (strain DSM 101675 / C91 / Nm57).